The following is a 67-amino-acid chain: Light-harvesting protein B-870 alpha chain (67 aa).

At 1 to 12 the chain is on the cytoplasmic side; it reads MWRIWRLFDPMR. A helical transmembrane segment spans residues 13–33; the sequence is AMVAQAVFLLGLAVLIHLMLL. His29 contributes to the a bacteriochlorophyll binding site. Residues 34-67 lie on the Periplasmic side of the membrane; that stretch reads GTNKYNWLDGAKKAPVATAVAPVPAEVTSLAQAK.

The protein belongs to the antenna complex alpha subunit family. In terms of assembly, an alpha/beta heterodimer. The core complex is formed by different alpha and beta chains, binding bacteriochlorophyll molecules, and arranged most probably in tetrameric structures disposed around the reaction center. The non-pigmented gamma chains may constitute additional components.

It localises to the cell inner membrane. In terms of biological role, antenna complexes are light-harvesting systems, which transfer the excitation energy to the reaction centers. The chain is Light-harvesting protein B-870 alpha chain (pufA) from Rubrivivax gelatinosus (strain NBRC 100245 / IL144).